Consider the following 206-residue polypeptide: GTP cyclohydrolase 1 (206 aa).

Zn(2+) contacts are provided by Cys-95, His-98, and Cys-166.

It belongs to the GTP cyclohydrolase I family. Toroid-shaped homodecamer, composed of two pentamers of five dimers.

The enzyme catalyses GTP + H2O = 7,8-dihydroneopterin 3'-triphosphate + formate + H(+). It functions in the pathway cofactor biosynthesis; 7,8-dihydroneopterin triphosphate biosynthesis; 7,8-dihydroneopterin triphosphate from GTP: step 1/1. In Bartonella bacilliformis (strain ATCC 35685 / KC583 / Herrer 020/F12,63), this protein is GTP cyclohydrolase 1.